The chain runs to 87 residues: Small ribosomal subunit protein uS17 (87 aa).

The protein belongs to the universal ribosomal protein uS17 family. Part of the 30S ribosomal subunit.

Functionally, one of the primary rRNA binding proteins, it binds specifically to the 5'-end of 16S ribosomal RNA. The chain is Small ribosomal subunit protein uS17 from Listeria innocua serovar 6a (strain ATCC BAA-680 / CLIP 11262).